Reading from the N-terminus, the 266-residue chain is Undecaprenyl-diphosphatase (266 aa).

The next 8 membrane-spanning stretches (helical) occupy residues 1–21 (MDTF…FLPI), 39–59 (QGLS…VIYF), 87–107 (WWII…KDFI), 111–131 (LRSA…LWWA), 149–169 (ALLI…RSGA), 183–203 (AAAR…AILV), 218–238 (ALTL…HYFL), and 246–266 (MTPF…FIFL).

Belongs to the UppP family.

It localises to the cell inner membrane. The enzyme catalyses di-trans,octa-cis-undecaprenyl diphosphate + H2O = di-trans,octa-cis-undecaprenyl phosphate + phosphate + H(+). In terms of biological role, catalyzes the dephosphorylation of undecaprenyl diphosphate (UPP). Confers resistance to bacitracin. This Shewanella sp. (strain MR-7) protein is Undecaprenyl-diphosphatase.